Consider the following 586-residue polypeptide: Putative Lon protease homolog (586 aa).

One can recognise a Lon proteolytic domain in the interval 346–543 (GERIGQINAL…TDALPLLLNL (198 aa)). Active-site residues include Ser-438 and Lys-481.

The protein belongs to the peptidase S16 family.

The polypeptide is Putative Lon protease homolog (ycbZ) (Escherichia coli (strain K12)).